A 314-amino-acid polypeptide reads, in one-letter code: uncharacterized protein (314 aa).

Disordered regions lie at residues 170–203 and 258–314; these read RSSM…NPDE and VGES…PKKR. A compositionally biased stretch (low complexity) spans 171–186; sequence SSMNSQSQMSESSFPT. A compositionally biased stretch (pro residues) spans 187-200; the sequence is PIDPPPRIPHPPLN. Over residues 261–272 the composition is skewed to polar residues; the sequence is SSRQGENTQNVH. The segment covering 289–303 has biased composition (basic and acidic residues); sequence RFKDDARKSNEDEHM.

This is an uncharacterized protein from Arabidopsis thaliana (Mouse-ear cress).